Consider the following 453-residue polypeptide: Tubulin alpha chain (453 aa).

Glutamine 11 is a binding site for GTP. Position 40 is an N6-acetyllysine (lysine 40). GTP contacts are provided by glutamate 71, glycine 144, threonine 145, threonine 179, asparagine 206, and asparagine 228. Residue glutamate 71 participates in Mg(2+) binding. Glutamate 254 is an active-site residue.

The protein belongs to the tubulin family. Dimer of alpha and beta chains. A typical microtubule is a hollow water-filled tube with an outer diameter of 25 nm and an inner diameter of 15 nM. Alpha-beta heterodimers associate head-to-tail to form protofilaments running lengthwise along the microtubule wall with the beta-tubulin subunit facing the microtubule plus end conferring a structural polarity. Microtubules usually have 13 protofilaments but different protofilament numbers can be found in some organisms and specialized cells. The cofactor is Mg(2+). Post-translationally, undergoes a tyrosination/detyrosination cycle, the cyclic removal and re-addition of a C-terminal tyrosine residue by the enzymes tubulin tyrosine carboxypeptidase (TTCP) and tubulin tyrosine ligase (TTL), respectively. Acetylation of alpha chains at Lys-40 stabilizes microtubules and affects affinity and processivity of microtubule motors. This modification has a role in multiple cellular functions, ranging from cell motility, cell cycle progression or cell differentiation to intracellular trafficking and signaling.

The protein localises to the cytoplasm. The protein resides in the cytoskeleton. The catalysed reaction is GTP + H2O = GDP + phosphate + H(+). Its function is as follows. Tubulin is the major constituent of microtubules, a cylinder consisting of laterally associated linear protofilaments composed of alpha- and beta-tubulin heterodimers. Microtubules grow by the addition of GTP-tubulin dimers to the microtubule end, where a stabilizing cap forms. Below the cap, tubulin dimers are in GDP-bound state, owing to GTPase activity of alpha-tubulin. In Neospora caninum (Coccidian parasite), this protein is Tubulin alpha chain (TUBA).